Here is a 429-residue protein sequence, read N- to C-terminus: MNILIIGNGGREHALAWKVAQSPLADKVFVAPGNAGTALEHKVENVNISATDIPALVKFAQDKQIGLTIVGPEAPLVIGVVDAFREAGLKIFGPAKAAAQLEGSKAFTKDFLARHKIPTAEYQNFTEVEPALTYLREKGTPIVVKADGLAAGKGVIVAMTLQEAEDAVRDMLSGNAFGEAGSRVVIEEFLDGEEASFIVMVDGKNVEPMASSQDHKRVGENDTGLNTGGMGAYSPAPVITPEIHSRIMKEVIYPTVNGMAAEGNVYTGFLYAGLMIMPNGQPKVIEFNCRFGDPETQPIMLRLKSDLVELCLKACDGKLDEVISQWDLRASLGIVLAAEGYPKDYRKGDEISGLPKSAVKNEKVFLAGVAEQEGKLVTNGGRVLCVTALGESVFEAQQKALKLAEQIQWSGRFYRRDIGYRAVERELQK.

The ATP-grasp domain occupies 109 to 316 (KDFLARHKIP…LVELCLKACD (208 aa)). Residue 135-196 (LREKGTPIVV…EEFLDGEEAS (62 aa)) participates in ATP binding. The Mg(2+) site is built by Glu-286 and Asn-288.

Belongs to the GARS family. The cofactor is Mg(2+). Mn(2+) is required as a cofactor.

The enzyme catalyses 5-phospho-beta-D-ribosylamine + glycine + ATP = N(1)-(5-phospho-beta-D-ribosyl)glycinamide + ADP + phosphate + H(+). Its pathway is purine metabolism; IMP biosynthesis via de novo pathway; N(1)-(5-phospho-D-ribosyl)glycinamide from 5-phospho-alpha-D-ribose 1-diphosphate: step 2/2. The protein is Phosphoribosylamine--glycine ligase of Haemophilus influenzae (strain ATCC 51907 / DSM 11121 / KW20 / Rd).